Consider the following 104-residue polypeptide: Replication restart protein PriB (104 aa).

An SSB domain is found at 1–101; that stretch reads MTNRLVLSGT…LHAEQIELID (101 aa).

This sequence belongs to the PriB family. As to quaternary structure, homodimer. Interacts with PriA and DnaT. Component of the replication restart primosome. Primosome assembly occurs via a 'hand-off' mechanism. PriA binds to replication forks, subsequently PriB then DnaT bind; DnaT then displaces ssDNA to generate the helicase loading substrate.

Involved in the restart of stalled replication forks, which reloads the replicative helicase on sites other than the origin of replication; the PriA-PriB pathway is the major replication restart pathway. During primosome assembly it facilitates complex formation between PriA and DnaT on DNA; stabilizes PriA on DNA. Stimulates the DNA unwinding activity of PriA helicase. This is Replication restart protein PriB from Escherichia coli (strain ATCC 8739 / DSM 1576 / NBRC 3972 / NCIMB 8545 / WDCM 00012 / Crooks).